The sequence spans 1336 residues: Cytokinesis protein sepH (1336 aa).

Residues 1-10 show a composition bias toward low complexity; that stretch reads MVSRSSETSE. The segment at 1–46 is disordered; it reads MVSRSSETSEGPPPPSKIPGTPAKTRLSRLNSSPAKQDKPKDDRVV. Residues 36-46 show a composition bias toward basic and acidic residues; sequence KQDKPKDDRVV. In terms of domain architecture, Protein kinase spans 59 to 309; it reads YQLGDCLGKG…ARKLLKHPWI (251 aa). Residues 65 to 73 and Lys-88 each bind ATP; that span reads LGKGAFGSV. Asp-181 acts as the Proton acceptor in catalysis. The disordered stretch occupies residues 368–402; it reads SRYTPTKDILPSPVSKHVTDRFRSPDSTEEDNWDD. A compositionally biased stretch (basic and acidic residues) spans 384–393; the sequence is HVTDRFRSPD. Residues 654–682 adopt a coiled-coil conformation; that stretch reads AQLEEGLDEVDLEANIARDKYARLRGQVE. Positions 1194-1205 are enriched in basic and acidic residues; sequence ERSESFSLEKRK. The interval 1194-1336 is disordered; it reads ERSESFSLEK…PTHADSDWAS (143 aa). Positions 1213-1236 are enriched in polar residues; it reads TSTTPPGYLANQSAPATPQINRFN. 2 stretches are compositionally biased toward low complexity: residues 1253-1264 and 1272-1285; these read PSLSSSALALRP and PSLSAGLSSSAGPS. The span at 1315 to 1327 shows a compositional bias: basic residues; it reads SRRRSILPQRRRP.

Belongs to the protein kinase superfamily. Ser/Thr protein kinase family. CDC7 subfamily. The cofactor is Mg(2+).

The catalysed reaction is L-seryl-[protein] + ATP = O-phospho-L-seryl-[protein] + ADP + H(+). The enzyme catalyses L-threonyl-[protein] + ATP = O-phospho-L-threonyl-[protein] + ADP + H(+). Required for early events during cytokinesis including localization of cytoskeletal components to the cytokinetic ring. In Aspergillus niger (strain ATCC MYA-4892 / CBS 513.88 / FGSC A1513), this protein is Cytokinesis protein sepH.